The following is a 267-amino-acid chain: Small ribosomal subunit protein uS2 (267 aa).

The interval 232–267 (ATVREEEFADAPAEDAKPARRAPAKKAAADKGEAQA) is disordered. Over residues 258–267 (AAADKGEAQA) the composition is skewed to basic and acidic residues.

This sequence belongs to the universal ribosomal protein uS2 family.

This chain is Small ribosomal subunit protein uS2, found in Stenotrophomonas maltophilia (strain R551-3).